A 694-amino-acid chain; its full sequence is Methionine--tRNA ligase (694 aa).

Positions 12–22 match the 'HIGH' region motif; it reads PYANGPLHLGH. 4 residues coordinate Zn(2+): C143, C146, C156, and C159. Residues 330–334 carry the 'KMSKS' region motif; the sequence is KMSKS. K333 provides a ligand contact to ATP. Residues 552–577 form a disordered region; it reads APAAPAATTKPAPSKADAAPAAVANP. Residues 591–694 enclose the tRNA-binding domain; that stretch reads DFAKLDLRIG…AGAQPGMPVR (104 aa).

This sequence belongs to the class-I aminoacyl-tRNA synthetase family. MetG type 1 subfamily. Homodimer. The cofactor is Zn(2+).

The protein resides in the cytoplasm. It carries out the reaction tRNA(Met) + L-methionine + ATP = L-methionyl-tRNA(Met) + AMP + diphosphate. In terms of biological role, is required not only for elongation of protein synthesis but also for the initiation of all mRNA translation through initiator tRNA(fMet) aminoacylation. This chain is Methionine--tRNA ligase, found in Xanthomonas campestris pv. campestris (strain B100).